Reading from the N-terminus, the 266-residue chain is 4-diphosphocytidyl-2-C-methyl-D-erythritol kinase (266 aa).

Residue K11 is part of the active site. 103–113 (PTFAGLGGGSS) is an ATP binding site. Residue D145 is part of the active site.

Belongs to the GHMP kinase family. IspE subfamily.

It carries out the reaction 4-CDP-2-C-methyl-D-erythritol + ATP = 4-CDP-2-C-methyl-D-erythritol 2-phosphate + ADP + H(+). The protein operates within isoprenoid biosynthesis; isopentenyl diphosphate biosynthesis via DXP pathway; isopentenyl diphosphate from 1-deoxy-D-xylulose 5-phosphate: step 3/6. Functionally, catalyzes the phosphorylation of the position 2 hydroxy group of 4-diphosphocytidyl-2C-methyl-D-erythritol. The sequence is that of 4-diphosphocytidyl-2-C-methyl-D-erythritol kinase from Sulfurimonas denitrificans (strain ATCC 33889 / DSM 1251) (Thiomicrospira denitrificans (strain ATCC 33889 / DSM 1251)).